The sequence spans 528 residues: Glutamyl-tRNA(Gln) amidotransferase subunit A, mitochondrial (528 aa).

Lys76 (charge relay system) is an active-site residue. The disordered stretch occupies residues 147–166 (QYREKRKQNPHSKNEDSDWL). Ser171 functions as the Charge relay system in the catalytic mechanism. Ser195 (acyl-ester intermediate) is an active-site residue.

The protein belongs to the amidase family. GatA subfamily. As to quaternary structure, subunit of the heterotrimeric GatCAB amidotransferase (AdT) complex, composed of A (QRSL1), B (GATB) and C (GATC) subunits.

Its subcellular location is the mitochondrion. It catalyses the reaction L-glutamyl-tRNA(Gln) + L-glutamine + ATP + H2O = L-glutaminyl-tRNA(Gln) + L-glutamate + ADP + phosphate + H(+). Allows the formation of correctly charged Gln-tRNA(Gln) through the transamidation of misacylated Glu-tRNA(Gln) in the mitochondria. The reaction takes place in the presence of glutamine and ATP through an activated gamma-phospho-Glu-tRNA(Gln). The sequence is that of Glutamyl-tRNA(Gln) amidotransferase subunit A, mitochondrial from Macaca fascicularis (Crab-eating macaque).